Reading from the N-terminus, the 397-residue chain is Cercosporin biosynthesis regulatory protein CTB8 (397 aa).

Positions 26-53 form a DNA-binding region, zn(2)-C6 fungal-type; the sequence is CTHCSSQKIRCTKERPACARCVNKGLLC. Disordered stretches follow at residues 63–90 and 173–198; these read TRRHSVRATPEPETTISNAPTSSVAPDS and AEASTRPSSSSSPPSQRSDGGRATTH. A compositionally biased stretch (polar residues) spans 74–87; the sequence is PETTISNAPTSSVA. The span at 179–197 shows a compositional bias: low complexity; it reads PSSSSSPPSQRSDGGRATT.

The protein localises to the nucleus. Functionally, transcription regulator of the gene cluster that mediates the biosynthesis of cercosporin, a light-activated, non-host-selective toxin. The perylenequinone chromophore of cercosporin absorbs light energy to attain an electronically-activated triplet state and produces active oxygen species such as the hydroxyl radical, superoxide, hydrogen peroxide or singlet oxygen upon reaction with oxygen molecules. These reactive oxygen species cause damage to various cellular components including lipids, proteins and nucleic acids. The protein is Cercosporin biosynthesis regulatory protein CTB8 of Cercospora beticola (Sugarbeet leaf spot fungus).